The primary structure comprises 294 residues: MSNLKEIKRKIKSVHNTQKTTNAMKLVSTAKLKKTEEAAKRSKIYAQKIDEILSEISFQINKIVHNEDDMRLSLFHKKEQIKTVDLIFITADKGLCGGFNIKTLKTVSEMLKEYEAKNINIRLRAIGKTGIEYFNFQKIELLEKYFHLSSSPDYEKACEVIHAAVDDFLNGNTDEVILVHNGYKNMITQELKINHLIPVEPKSIEQTHNSLLELEPEGIELLEDLMKTYFEYNMYYALIDSLAAEHSARMQAMDNATNNAKARVKQLNLAYNKARQESITTELIEIISGVESMK.

This sequence belongs to the ATPase gamma chain family. As to quaternary structure, F-type ATPases have 2 components, CF(1) - the catalytic core - and CF(0) - the membrane proton channel. CF(1) has five subunits: alpha(3), beta(3), gamma(1), delta(1), epsilon(1). CF(0) has three main subunits: a, b and c.

The protein localises to the cell inner membrane. Produces ATP from ADP in the presence of a proton gradient across the membrane. The gamma chain is believed to be important in regulating ATPase activity and the flow of protons through the CF(0) complex. This is ATP synthase gamma chain from Campylobacter jejuni subsp. doylei (strain ATCC BAA-1458 / RM4099 / 269.97).